Here is a 233-residue protein sequence, read N- to C-terminus: Ribose-5-phosphate isomerase A (233 aa).

Substrate-binding positions include 31–34, 87–90, and 100–103; these read SGST, DGAD, and KGGG. The active-site Proton acceptor is Glu109. Lys127 contacts substrate.

Belongs to the ribose 5-phosphate isomerase family. Homodimer.

The catalysed reaction is aldehydo-D-ribose 5-phosphate = D-ribulose 5-phosphate. Its pathway is carbohydrate degradation; pentose phosphate pathway; D-ribose 5-phosphate from D-ribulose 5-phosphate (non-oxidative stage): step 1/1. Functionally, catalyzes the reversible conversion of ribose-5-phosphate to ribulose 5-phosphate. This is Ribose-5-phosphate isomerase A from Chlamydia caviae (strain ATCC VR-813 / DSM 19441 / 03DC25 / GPIC) (Chlamydophila caviae).